The sequence spans 797 residues: Complex I intermediate-associated protein 84, mitochondrial (797 aa).

A mitochondrion-targeting transit peptide spans 1-69; that stretch reads MRSHLARNAT…ALCTRTSKRT (69 aa).

The protein localises to the mitochondrion. Functionally, chaperone protein involved in the assembly of the mitochondrial NADH:ubiquinone oxidoreductase complex (complex I). The sequence is that of Complex I intermediate-associated protein 84, mitochondrial (cia84) from Neurospora crassa (strain ATCC 24698 / 74-OR23-1A / CBS 708.71 / DSM 1257 / FGSC 987).